Here is a 197-residue protein sequence, read N- to C-terminus: NADH-quinone oxidoreductase subunit C (197 aa).

It belongs to the complex I 30 kDa subunit family. NDH-1 is composed of 14 different subunits. Subunits NuoB, C, D, E, F, and G constitute the peripheral sector of the complex.

It localises to the cell inner membrane. The catalysed reaction is a quinone + NADH + 5 H(+)(in) = a quinol + NAD(+) + 4 H(+)(out). Functionally, NDH-1 shuttles electrons from NADH, via FMN and iron-sulfur (Fe-S) centers, to quinones in the respiratory chain. The immediate electron acceptor for the enzyme in this species is believed to be ubiquinone. Couples the redox reaction to proton translocation (for every two electrons transferred, four hydrogen ions are translocated across the cytoplasmic membrane), and thus conserves the redox energy in a proton gradient. This is NADH-quinone oxidoreductase subunit C from Methylobacillus flagellatus (strain ATCC 51484 / DSM 6875 / VKM B-1610 / KT).